Reading from the N-terminus, the 320-residue chain is GTP 3',8-cyclase (320 aa).

The region spanning 4-226 (TFQRSINYMR…PIITDATSPA (223 aa)) is the Radical SAM core domain. Arg-13 contributes to the GTP binding site. Residues Cys-20 and Cys-24 each contribute to the [4Fe-4S] cluster site. Tyr-26 contributes to the S-adenosyl-L-methionine binding site. [4Fe-4S] cluster is bound at residue Cys-27. Residue Arg-63 coordinates GTP. Gly-67 serves as a coordination point for S-adenosyl-L-methionine. Thr-94 is a GTP binding site. Ser-118 contacts S-adenosyl-L-methionine. Lys-155 contributes to the GTP binding site. Residue Met-189 coordinates S-adenosyl-L-methionine. 2 residues coordinate [4Fe-4S] cluster: Cys-249 and Cys-252. 254-256 (RIR) lines the GTP pocket. Cys-266 contributes to the [4Fe-4S] cluster binding site.

It belongs to the radical SAM superfamily. MoaA family. As to quaternary structure, monomer and homodimer. Requires [4Fe-4S] cluster as cofactor.

The catalysed reaction is GTP + AH2 + S-adenosyl-L-methionine = (8S)-3',8-cyclo-7,8-dihydroguanosine 5'-triphosphate + 5'-deoxyadenosine + L-methionine + A + H(+). The protein operates within cofactor biosynthesis; molybdopterin biosynthesis. In terms of biological role, catalyzes the cyclization of GTP to (8S)-3',8-cyclo-7,8-dihydroguanosine 5'-triphosphate. The protein is GTP 3',8-cyclase of Alkaliphilus metalliredigens (strain QYMF).